The chain runs to 1049 residues: Multiple C2 domain and transmembrane region protein 16 (1049 aa).

A C2 1 domain is found at methionine 1–tyrosine 112. The interval aspartate 136–aspartate 249 is disordered. Basic and acidic residues-rich tracts occupy residues valine 153 to proline 170 and glutamate 226 to glutamate 238. C2 domains lie at threonine 302 to tyrosine 426, threonine 460 to leucine 582, and valine 617 to tyrosine 745. 4 residues coordinate Ca(2+): serine 338, aspartate 390, threonine 393, and serine 398. 2 helical membrane passes run valine 883–isoleucine 903 and alanine 989–threonine 1009.

It belongs to the MCTP family. The cofactor is Ca(2+). In terms of tissue distribution, expressed in the vascular tissues of roots, cotyledons and rosette leaves. Accumulates in roots meristems and shoot apical meristems (SAMs). Observed in flowers.

The protein localises to the endoplasmic reticulum membrane. In terms of biological role, may function as a signaling molecule by regulating the trafficking of other regulators. This is Multiple C2 domain and transmembrane region protein 16 from Arabidopsis thaliana (Mouse-ear cress).